We begin with the raw amino-acid sequence, 473 residues long: Photosystem II CP43 reaction center protein (473 aa).

Residues 1 to 14 (MKTLYSLRRFYPVE) constitute a propeptide that is removed on maturation. Thr-15 is modified (N-acetylthreonine). Thr-15 is modified (phosphothreonine). Helical transmembrane passes span 69–93 (LFEV…PHLA), 134–155 (LLGP…KDRN), 178–200 (KALY…RRIT), 255–275 (KPFA…LSYS), and 291–312 (WFNN…ASQA). A [CaMn4O5] cluster-binding site is contributed by Glu-367. A helical membrane pass occupies residues 447 to 471 (RARAAAAGFEKGIDRDFEPVLFMTP).

The protein belongs to the PsbB/PsbC family. PsbC subfamily. PSII is composed of 1 copy each of membrane proteins PsbA, PsbB, PsbC, PsbD, PsbE, PsbF, PsbH, PsbI, PsbJ, PsbK, PsbL, PsbM, PsbT, PsbX, PsbY, PsbZ, Psb30/Ycf12, at least 3 peripheral proteins of the oxygen-evolving complex and a large number of cofactors. It forms dimeric complexes. Binds multiple chlorophylls and provides some of the ligands for the Ca-4Mn-5O cluster of the oxygen-evolving complex. It may also provide a ligand for a Cl- that is required for oxygen evolution. PSII binds additional chlorophylls, carotenoids and specific lipids. serves as cofactor.

The protein resides in the plastid. Its subcellular location is the chloroplast thylakoid membrane. In terms of biological role, one of the components of the core complex of photosystem II (PSII). It binds chlorophyll and helps catalyze the primary light-induced photochemical processes of PSII. PSII is a light-driven water:plastoquinone oxidoreductase, using light energy to abstract electrons from H(2)O, generating O(2) and a proton gradient subsequently used for ATP formation. The polypeptide is Photosystem II CP43 reaction center protein (Nuphar advena (Common spatterdock)).